Here is a 377-residue protein sequence, read N- to C-terminus: Spermidine/putrescine import ATP-binding protein PotA (377 aa).

The ABC transporter domain maps to isoleucine 18–isoleucine 248. An ATP-binding site is contributed by glycine 50–threonine 57.

The protein belongs to the ABC transporter superfamily. Spermidine/putrescine importer (TC 3.A.1.11.1) family. The complex is composed of two ATP-binding proteins (PotA), two transmembrane proteins (PotB and PotC) and a solute-binding protein (PotD).

The protein localises to the cell inner membrane. The enzyme catalyses ATP + H2O + polyamine-[polyamine-binding protein]Side 1 = ADP + phosphate + polyamineSide 2 + [polyamine-binding protein]Side 1.. Part of the ABC transporter complex PotABCD involved in spermidine/putrescine import. Responsible for energy coupling to the transport system. This is Spermidine/putrescine import ATP-binding protein PotA from Vibrio cholerae serotype O1 (strain ATCC 39315 / El Tor Inaba N16961).